Here is a 130-residue protein sequence, read N- to C-terminus: Holo-[acyl-carrier-protein] synthase (130 aa).

2 residues coordinate Mg(2+): D9 and E58.

Belongs to the P-Pant transferase superfamily. AcpS family. Requires Mg(2+) as cofactor.

The protein localises to the cytoplasm. The catalysed reaction is apo-[ACP] + CoA = holo-[ACP] + adenosine 3',5'-bisphosphate + H(+). In terms of biological role, transfers the 4'-phosphopantetheine moiety from coenzyme A to a Ser of acyl-carrier-protein. The sequence is that of Holo-[acyl-carrier-protein] synthase from Mycobacterium sp. (strain JLS).